Reading from the N-terminus, the 166-residue chain is UPF0336 protein ML2425 (166 aa).

The MaoC-like domain maps to 10 to 131; sequence LIGKHYRQLD…VIAEVRSEVT (122 aa).

It belongs to the UPF0336 family.

The protein is UPF0336 protein ML2425 of Mycobacterium leprae (strain TN).